Consider the following 118-residue polypeptide: Cycloviolacin-O8 (118 aa).

A signal peptide spans 1-22 (MEMKNMVVGLFLIAAFALPALA). Residues 23-84 (TNFEKDFITH…THSNSINALG (62 aa)) constitute a propeptide that is removed on maturation. A cross-link (cyclopeptide (Gly-Asn)) is located at residues 85–115 (GTLPCGESCVWIPCISSVVGCSCKSKVCYKN). Cystine bridges form between Cys89–Cys105, Cys93–Cys107, and Cys98–Cys112. Positions 116-118 (SLA) are excised as a propeptide.

Post-translationally, cycloviolacin-O8 is a cyclic peptide. As to expression, expressed in leaves, petals, petioles and roots but not in runners (at protein level).

Its function is as follows. Probably participates in a plant defense mechanism. The protein is Cycloviolacin-O8 (Voc1) of Viola odorata (Sweet violet).